Reading from the N-terminus, the 84-residue chain is Large ribosomal subunit protein bL27 (84 aa).

Residues 1–21 (MAHKKAGGSTRNGRDSESKRL) are disordered.

The protein belongs to the bacterial ribosomal protein bL27 family.

This chain is Large ribosomal subunit protein bL27, found in Baumannia cicadellinicola subsp. Homalodisca coagulata.